We begin with the raw amino-acid sequence, 261 residues long: Thiazole synthase (261 aa).

Lys101 functions as the Schiff-base intermediate with DXP in the catalytic mechanism. 1-deoxy-D-xylulose 5-phosphate is bound by residues Gly162, 188 to 189 (AG), and 210 to 211 (NT).

This sequence belongs to the ThiG family. Homotetramer. Forms heterodimers with either ThiH or ThiS.

The protein localises to the cytoplasm. The catalysed reaction is [ThiS sulfur-carrier protein]-C-terminal-Gly-aminoethanethioate + 2-iminoacetate + 1-deoxy-D-xylulose 5-phosphate = [ThiS sulfur-carrier protein]-C-terminal Gly-Gly + 2-[(2R,5Z)-2-carboxy-4-methylthiazol-5(2H)-ylidene]ethyl phosphate + 2 H2O + H(+). It participates in cofactor biosynthesis; thiamine diphosphate biosynthesis. Catalyzes the rearrangement of 1-deoxy-D-xylulose 5-phosphate (DXP) to produce the thiazole phosphate moiety of thiamine. Sulfur is provided by the thiocarboxylate moiety of the carrier protein ThiS. In vitro, sulfur can be provided by H(2)S. This Aromatoleum aromaticum (strain DSM 19018 / LMG 30748 / EbN1) (Azoarcus sp. (strain EbN1)) protein is Thiazole synthase.